A 253-amino-acid chain; its full sequence is uncharacterized protein (253 aa).

This is an uncharacterized protein from Acanthamoeba polyphaga mimivirus (APMV).